The primary structure comprises 642 residues: Fork head protein homolog 2 (642 aa).

Positions 1-23 are disordered; that stretch reads MTVRRLESKSEHISDDEERKEQL. In terms of domain architecture, FHA spans 96-160; the sequence is IILGREPANP…NGIKVDGKLF (65 aa). A DNA-binding region (fork-head) is located at residues 223–318; the sequence is KPPYSYSVMI…AKTRKTPRKR (96 aa). Basic residues predominate over residues 310–319; the sequence is KTRKTPRKRS. 3 disordered regions span residues 310-392, 519-574, and 586-642; these read KTRK…ETYK, VSDS…TEEN, and ATME…KSSA. Ser319, Ser321, Ser322, Ser334, and Ser336 each carry phosphoserine. Positions 348 to 362 are enriched in low complexity; that stretch reads TSIPAAEPASSTTSA. Polar residues-rich tracts occupy residues 363 to 381, 519 to 552, and 599 to 642; these read RDQT…TAET, VSDS…SANK, and TPTS…KSSA. Phosphoserine occurs at positions 375, 535, and 626.

In terms of processing, phosphorylated. Occurs periodically during mitosis.

It is found in the nucleus. In terms of biological role, required for promoter sequence element PCB-driven, M-phase-specific transcription. Acts as a transcriptional activator with a role in the regulation of mitosis. Binds, cooperatively with mcm1, the CLB cluster regulatory elements throughout the cell cycle. Regulates the periodic transcription of cdc15 and spo12. Required for the correct timing, positioning and contraction of the division septum. This Schizosaccharomyces pombe (strain 972 / ATCC 24843) (Fission yeast) protein is Fork head protein homolog 2 (fkh2).